We begin with the raw amino-acid sequence, 482 residues long: ATP synthase subunit beta (482 aa).

Residue 162–169 (GGAGVGKT) participates in ATP binding.

In terms of assembly, F-type ATPases have 2 components, CF(1) - the catalytic core - and CF(0) - the membrane proton channel. CF(1) has five subunits: alpha(3), beta(3), gamma(1), delta(1), epsilon(1). CF(0) has four main subunits: a(1), b(1), b'(1) and c(9-12).

It is found in the cellular thylakoid membrane. It carries out the reaction ATP + H2O + 4 H(+)(in) = ADP + phosphate + 5 H(+)(out). With respect to regulation, inhibited by dicyclohexylcarbodiimide. In terms of biological role, produces ATP from ADP in the presence of a proton gradient across the membrane. The catalytic sites are hosted primarily by the beta subunits. Functionally, the complex from the organism is particularly stable to disruption and remains functional after 6 hrs at 55 degrees Celsius. The sequence is that of ATP synthase subunit beta from Thermosynechococcus vestitus (strain NIES-2133 / IAM M-273 / BP-1).